The primary structure comprises 348 residues: Methylthioribose-1-phosphate isomerase (348 aa).

Residues 54–56, Arg-96, and Gln-199 each bind substrate; that span reads RGA. Asp-240 functions as the Proton donor in the catalytic mechanism. 250–251 is a binding site for substrate; sequence NK.

Belongs to the eIF-2B alpha/beta/delta subunits family. MtnA subfamily.

The enzyme catalyses 5-(methylsulfanyl)-alpha-D-ribose 1-phosphate = 5-(methylsulfanyl)-D-ribulose 1-phosphate. It participates in amino-acid biosynthesis; L-methionine biosynthesis via salvage pathway; L-methionine from S-methyl-5-thio-alpha-D-ribose 1-phosphate: step 1/6. Its function is as follows. Catalyzes the interconversion of methylthioribose-1-phosphate (MTR-1-P) into methylthioribulose-1-phosphate (MTRu-1-P). This Thioalkalivibrio sulfidiphilus (strain HL-EbGR7) protein is Methylthioribose-1-phosphate isomerase.